The primary structure comprises 408 residues: tRNA-specific 2-thiouridylase MnmA (408 aa).

Residues Ala-27–Ser-34 and Leu-53 each bind ATP. Cys-121 acts as the Nucleophile in catalysis. A disulfide bond links Cys-121 and Cys-222. Gly-145 is an ATP binding site. The interval Arg-172–Gln-174 is interaction with tRNA. The active-site Cysteine persulfide intermediate is the Cys-222.

The protein belongs to the MnmA/TRMU family.

The protein localises to the cytoplasm. The catalysed reaction is S-sulfanyl-L-cysteinyl-[protein] + uridine(34) in tRNA + AH2 + ATP = 2-thiouridine(34) in tRNA + L-cysteinyl-[protein] + A + AMP + diphosphate + H(+). Functionally, catalyzes the 2-thiolation of uridine at the wobble position (U34) of tRNA, leading to the formation of s(2)U34. The polypeptide is tRNA-specific 2-thiouridylase MnmA (Rhizobium etli (strain CIAT 652)).